The primary structure comprises 416 residues: Tyrosine--tRNA ligase (416 aa).

Positions 55–64 (PTGSEIHLGH) match the 'HIGH' region motif. A 'KMSKS' region motif is present at residues 249–253 (KMSKS). Lys252 is a binding site for ATP. Positions 352-416 (TKAFHLLSSI…GKKTFRRISN (65 aa)) constitute an S4 RNA-binding domain.

This sequence belongs to the class-I aminoacyl-tRNA synthetase family. TyrS type 2 subfamily. As to quaternary structure, homodimer.

It localises to the cytoplasm. The enzyme catalyses tRNA(Tyr) + L-tyrosine + ATP = L-tyrosyl-tRNA(Tyr) + AMP + diphosphate + H(+). Functionally, catalyzes the attachment of tyrosine to tRNA(Tyr) in a two-step reaction: tyrosine is first activated by ATP to form Tyr-AMP and then transferred to the acceptor end of tRNA(Tyr). In Prochlorococcus marinus (strain SARG / CCMP1375 / SS120), this protein is Tyrosine--tRNA ligase.